Consider the following 137-residue polypeptide: ER-derived vesicles protein erv14 (137 aa).

Topologically, residues 1–9 (MMSFGSFVY) are cytoplasmic. Residues 10–30 (IACLLLNGANMLLQIFCVIMF) traverse the membrane as a helical segment. Residues 31-62 (SDLEMDYINPIDLCNKLNDLVMPEIISHTLVT) are Extracellular-facing. Residues 63–83 (LLLLLGKKWLLFLANLPLLVF) traverse the membrane as a helical segment. Residues 84 to 114 (HANQVIHKTHILDATEIFRQLGRHKRDNFIK) lie on the Cytoplasmic side of the membrane. The chain crosses the membrane as a helical span at residues 115 to 135 (VTFYLIMFFTLLYCMVMSLIQ). Topologically, residues 136–137 (EE) are extracellular.

Belongs to the cornichon family.

It localises to the endoplasmic reticulum. The protein resides in the membrane. The protein localises to the golgi apparatus membrane. Regulates export of the secretory proteins from the endoplasmic reticulum in COPII-coated vesicles. The protein is ER-derived vesicles protein erv14 (erv14) of Schizosaccharomyces pombe (strain 972 / ATCC 24843) (Fission yeast).